The following is a 126-amino-acid chain: Prefoldin subunit beta (126 aa).

It belongs to the prefoldin subunit beta family. As to quaternary structure, heterohexamer of two alpha and four beta subunits.

The protein localises to the cytoplasm. Functionally, molecular chaperone capable of stabilizing a range of proteins. Seems to fulfill an ATP-independent, HSP70-like function in archaeal de novo protein folding. In Methanocella arvoryzae (strain DSM 22066 / NBRC 105507 / MRE50), this protein is Prefoldin subunit beta.